A 377-amino-acid chain; its full sequence is N5-carboxyaminoimidazole ribonucleotide synthase (377 aa).

Residues Arg-93, Lys-133, 138–144 (GYDGKGQ), 175–178 (EEFV), Glu-183, His-206, and 257–258 (NE) each bind ATP. Residues 97–287 (KALLDHAGVR…QFENHLRAVC (191 aa)) form the ATP-grasp domain.

The protein belongs to the PurK/PurT family. Homodimer.

The enzyme catalyses 5-amino-1-(5-phospho-beta-D-ribosyl)imidazole + hydrogencarbonate + ATP = 5-carboxyamino-1-(5-phospho-D-ribosyl)imidazole + ADP + phosphate + 2 H(+). It participates in purine metabolism; IMP biosynthesis via de novo pathway; 5-amino-1-(5-phospho-D-ribosyl)imidazole-4-carboxylate from 5-amino-1-(5-phospho-D-ribosyl)imidazole (N5-CAIR route): step 1/2. Its function is as follows. Catalyzes the ATP-dependent conversion of 5-aminoimidazole ribonucleotide (AIR) and HCO(3)(-) to N5-carboxyaminoimidazole ribonucleotide (N5-CAIR). This chain is N5-carboxyaminoimidazole ribonucleotide synthase, found in Vibrio vulnificus (strain CMCP6).